The primary structure comprises 336 residues: uncharacterized protein (336 aa).

An N-terminal signal peptide occupies residues 1–21 (MSELVLITGITGFVASHSAEA). Lys-38 contributes to the NADP(+) binding site. Thr-153 is modified (phosphothreonine). Tyr-167 provides a ligand contact to NADP(+).

The protein belongs to the NAD(P)-dependent epimerase/dehydratase family. Dihydroflavonol-4-reductase subfamily.

This is an uncharacterized protein from Schizosaccharomyces pombe (strain 972 / ATCC 24843) (Fission yeast).